A 332-amino-acid chain; its full sequence is Ketol-acid reductoisomerase (NADP(+)) (332 aa).

In terms of domain architecture, KARI N-terminal Rossmann spans 4 to 184 (ARMYYDEDAD…GGTRAGILET (181 aa)). NADP(+) contacts are provided by residues 27–30 (YGSQ), Ser-53, Ser-55, and 85–88 (DEVQ). His-110 is an active-site residue. Gly-136 serves as a coordination point for NADP(+). Residues 185-330 (TFREEAETDL…ADLRKMMSWL (146 aa)) form the KARI C-terminal knotted domain. Residues Asp-193, Glu-197, Glu-229, and Glu-233 each contribute to the Mg(2+) site. Residue Ser-254 coordinates substrate.

The protein belongs to the ketol-acid reductoisomerase family. The cofactor is Mg(2+).

The enzyme catalyses (2R)-2,3-dihydroxy-3-methylbutanoate + NADP(+) = (2S)-2-acetolactate + NADPH + H(+). The catalysed reaction is (2R,3R)-2,3-dihydroxy-3-methylpentanoate + NADP(+) = (S)-2-ethyl-2-hydroxy-3-oxobutanoate + NADPH + H(+). The protein operates within amino-acid biosynthesis; L-isoleucine biosynthesis; L-isoleucine from 2-oxobutanoate: step 2/4. Its pathway is amino-acid biosynthesis; L-valine biosynthesis; L-valine from pyruvate: step 2/4. Involved in the biosynthesis of branched-chain amino acids (BCAA). Catalyzes an alkyl-migration followed by a ketol-acid reduction of (S)-2-acetolactate (S2AL) to yield (R)-2,3-dihydroxy-isovalerate. In the isomerase reaction, S2AL is rearranged via a Mg-dependent methyl migration to produce 3-hydroxy-3-methyl-2-ketobutyrate (HMKB). In the reductase reaction, this 2-ketoacid undergoes a metal-dependent reduction by NADPH to yield (R)-2,3-dihydroxy-isovalerate. This is Ketol-acid reductoisomerase (NADP(+)) from Gloeobacter violaceus (strain ATCC 29082 / PCC 7421).